Consider the following 676-residue polypeptide: Ion-translocating oxidoreductase complex subunit C (676 aa).

4Fe-4S ferredoxin-type domains are found at residues G369–Y397 and K407–F436. Residues C377, C380, C383, C387, C416, C419, C422, and C426 each coordinate [4Fe-4S] cluster. Residues A600–K652 are disordered. Over residues Q605 to Q615 the composition is skewed to low complexity.

Belongs to the 4Fe4S bacterial-type ferredoxin family. RnfC subfamily. As to quaternary structure, the complex is composed of six subunits: RsxA, RsxB, RsxC, RsxD, RsxE and RsxG. [4Fe-4S] cluster serves as cofactor.

The protein resides in the cell inner membrane. Functionally, part of a membrane-bound complex that couples electron transfer with translocation of ions across the membrane. Required to maintain the reduced state of SoxR. This Escherichia coli (strain SMS-3-5 / SECEC) protein is Ion-translocating oxidoreductase complex subunit C.